We begin with the raw amino-acid sequence, 211 residues long: Urease accessory protein UreF (211 aa).

A disordered region spans residues 71-93; it reads DDADRETDARTPAPAARHASRSQ.

Belongs to the UreF family. UreD, UreF and UreG form a complex that acts as a GTP-hydrolysis-dependent molecular chaperone, activating the urease apoprotein by helping to assemble the nickel containing metallocenter of UreC. The UreE protein probably delivers the nickel.

The protein resides in the cytoplasm. Functionally, required for maturation of urease via the functional incorporation of the urease nickel metallocenter. The protein is Urease accessory protein UreF of Mycobacterium bovis (strain ATCC BAA-935 / AF2122/97).